Reading from the N-terminus, the 412-residue chain is Aspartokinase (412 aa).

2 ACT domains span residues 266-340 (LTIR…GDTN) and 346-412 (IVGV…RQGE).

It belongs to the aspartokinase family.

The catalysed reaction is L-aspartate + ATP = 4-phospho-L-aspartate + ADP. Its pathway is amino-acid biosynthesis; L-lysine biosynthesis via DAP pathway; (S)-tetrahydrodipicolinate from L-aspartate: step 1/4. It functions in the pathway amino-acid biosynthesis; L-methionine biosynthesis via de novo pathway; L-homoserine from L-aspartate: step 1/3. The protein operates within amino-acid biosynthesis; L-threonine biosynthesis; L-threonine from L-aspartate: step 1/5. The chain is Aspartokinase (lysC) from Pseudomonas aeruginosa (strain ATCC 15692 / DSM 22644 / CIP 104116 / JCM 14847 / LMG 12228 / 1C / PRS 101 / PAO1).